Reading from the N-terminus, the 121-residue chain is Met-lysine-1a (121 aa).

Positions 1-22 (MKSFVFALALIVAFACISESKS) are cleaved as a signal peptide. The propeptide occupies 23–69 (DHTGYEEEENLEDSELTDLVTAALLEELAEASEMDDLSYTEEAGGER). Met120 is subject to Methionine amide.

As to expression, expressed by the venom gland.

Its subcellular location is the secreted. Functionally, shows no antimicrobial activity against Gram-positive bacterium B.subtilis B-501 or Gram-negative bacterium E.coli DH5-alpha at concentrations up to 20 ug/ml. Shows no toxicity towards insect (S.carnaria) larvae. The polypeptide is Met-lysine-1a (Lachesana tarabaevi (Spider)).